The sequence spans 260 residues: Homeobox protein CDX-1 (260 aa).

A DNA-binding region (homeobox) is located at residues 149 to 208 (KDKYRVVYTDHQRLELEKEFHYSRYITIRRKAELAAALGLTERQVKIWFQNRRAKERKVN). Residues 152–173 (YRVVYTDHQRLELEKEFHYSRY) are interaction with DNA. The tract at residues 191-202 (RQVKIWFQNRRA) is interaction with 5-mCpG DNA. The segment at 204–260 (ERKVNKKKLQQQSQPTSTTTPTPPAVGTPGPMGTLCSGSAPSLVSSSPLTIKEEFMP) is disordered. Low complexity-rich tracts occupy residues 213–223 (QQQSQPTSTTT) and 240–252 (SGSA…SSPL).

It belongs to the Caudal homeobox family.

Its subcellular location is the nucleus. In terms of biological role, plays a role in transcriptional regulation. Involved in activated KRAS-mediated transcriptional activation of PRKD1. Binds to the PRKD1 promoter. Could play a role in the terminal differentiation of the intestine. Binds preferentially to methylated DNA. The polypeptide is Homeobox protein CDX-1 (CDX1) (Gallus gallus (Chicken)).